The chain runs to 605 residues: Aspartate--tRNA(Asp/Asn) ligase (605 aa).

An L-aspartate-binding site is contributed by Glu183. The aspartate stretch occupies residues 207–210; sequence QLYK. L-aspartate is bound at residue Arg229. ATP is bound by residues 229–231 and Gln238; that span reads RDE. His456 contributes to the L-aspartate binding site. Glu490 is an ATP binding site. Arg497 serves as a coordination point for L-aspartate. Residue 542–545 participates in ATP binding; that stretch reads GLDR.

Belongs to the class-II aminoacyl-tRNA synthetase family. Type 1 subfamily. Homodimer.

It localises to the cytoplasm. It carries out the reaction tRNA(Asx) + L-aspartate + ATP = L-aspartyl-tRNA(Asx) + AMP + diphosphate. Functionally, aspartyl-tRNA synthetase with relaxed tRNA specificity since it is able to aspartylate not only its cognate tRNA(Asp) but also tRNA(Asn). Reaction proceeds in two steps: L-aspartate is first activated by ATP to form Asp-AMP and then transferred to the acceptor end of tRNA(Asp/Asn). This chain is Aspartate--tRNA(Asp/Asn) ligase, found in Heliobacterium modesticaldum (strain ATCC 51547 / Ice1).